A 432-amino-acid chain; its full sequence is Glucose-6-phosphate isomerase (432 aa).

The Proton donor role is filled by Glu-283. Residues His-304 and Lys-418 contribute to the active site.

Belongs to the GPI family.

It localises to the cytoplasm. It carries out the reaction alpha-D-glucose 6-phosphate = beta-D-fructose 6-phosphate. The protein operates within carbohydrate biosynthesis; gluconeogenesis. Its pathway is carbohydrate degradation; glycolysis; D-glyceraldehyde 3-phosphate and glycerone phosphate from D-glucose: step 2/4. Catalyzes the reversible isomerization of glucose-6-phosphate to fructose-6-phosphate. This Rubrobacter xylanophilus (strain DSM 9941 / JCM 11954 / NBRC 16129 / PRD-1) protein is Glucose-6-phosphate isomerase.